The primary structure comprises 60 residues: Homeobox protein engrailed-like (60 aa).

A DNA-binding region (homeobox) is located at residues 1–41 (GEQLCRLRAEFQASRYLTEERRTALARELRLNEAQIKIWFQ).

It belongs to the engrailed homeobox family.

It localises to the nucleus. In Lampetra planeri (Brook lamprey), this protein is Homeobox protein engrailed-like.